A 466-amino-acid chain; its full sequence is Asparagine--tRNA ligase (466 aa).

The protein belongs to the class-II aminoacyl-tRNA synthetase family. Homodimer.

Its subcellular location is the cytoplasm. It carries out the reaction tRNA(Asn) + L-asparagine + ATP = L-asparaginyl-tRNA(Asn) + AMP + diphosphate + H(+). This Salmonella paratyphi A (strain ATCC 9150 / SARB42) protein is Asparagine--tRNA ligase.